The chain runs to 37 residues: Large ribosomal subunit protein bL36c (37 aa).

It belongs to the bacterial ribosomal protein bL36 family.

The protein resides in the plastid. It localises to the chloroplast. The protein is Large ribosomal subunit protein bL36c of Welwitschia mirabilis (Tree tumbo).